Consider the following 426-residue polypeptide: Glutamate-1-semialdehyde 2,1-aminomutase (426 aa).

The residue at position 265 (K265) is an N6-(pyridoxal phosphate)lysine.

Belongs to the class-III pyridoxal-phosphate-dependent aminotransferase family. HemL subfamily. Homodimer. Pyridoxal 5'-phosphate serves as cofactor.

It localises to the cytoplasm. It carries out the reaction (S)-4-amino-5-oxopentanoate = 5-aminolevulinate. It participates in porphyrin-containing compound metabolism; protoporphyrin-IX biosynthesis; 5-aminolevulinate from L-glutamyl-tRNA(Glu): step 2/2. The polypeptide is Glutamate-1-semialdehyde 2,1-aminomutase (Escherichia coli O157:H7).